A 564-amino-acid chain; its full sequence is MRIIYLISTVLLIYTNATVLRTKESIQNKVTYDKYGFQPLCISCTGLISVASFFLKFDVSEPVILEFATIVCKLFAKQPWAVCDGISSQFRDEFFYVFRRLANESPSQICGIILPDCADPTDPSESGWMVALPPKPKRTRISKKKVQKKPNMSMSQNLNVLQLTDLHVDFEYKYPSEANCDDPVCCRVSVSEPKKAAGYWGSVGKCDIPFWTVENMLSHINKTHMIDMVIMTGDYINHVDWEYSIEEHLSVLRKLHRLVQNTFPSTPIYWALGNHEGVPVNSFAPHSVDERFWPTWLYKEFQTMSGPWLSEGAKDSLLKRGSYSTQVMDGLKLITLNTGFCEVTNFFLYLNQSDPDSSMSWFVKELFESEKKGEQVYVLAHIPPGDSECLEGWAFNYYRVIQRFSSTIAAQFFGHDHLDYFTVFYEDMHNVSSKPISVGYASPSVTTFEYQNPAYRIYEIDPYNKFKIVDFTTYYADLEKATEDKKPVWEKLYSARQAHGMDDLSPLSWNKVIQKLFTSEKKREKFYQYAFRNFSPQCDSTCQMQLMCNLRMGHHNSTLYCPTF.

The first 17 residues, 1 to 17 (MRIIYLISTVLLIYTNA), serve as a signal peptide directing secretion. In terms of domain architecture, Saposin B-type spans 37–121 (FQPLCISCTG…IILPDCADPT (85 aa)). Cystine bridges form between C41–C117, C44–C110, and C72–C83. N-linked (GlcNAc...) asparagine glycosylation occurs at N151. Residues D165 and H167 each contribute to the Zn(2+) site. 2 cysteine pairs are disulfide-bonded: C180-C185 and C186-C206. An N-linked (GlcNAc...) asparagine glycan is attached at N221. Residues D234 and N274 each contribute to the Zn(2+) site. Cysteines 341 and 389 form a disulfide. Residue N351 is glycosylated (N-linked (GlcNAc...) asparagine). Positions 381, 415, and 417 each coordinate Zn(2+). N430 carries an N-linked (GlcNAc...) asparagine glycan. Cystine bridges form between C538-C542 and C548-C561. N556 is a glycosylation site (N-linked (GlcNAc...) asparagine).

This sequence belongs to the acid sphingomyelinase family. It depends on Zn(2+) as a cofactor.

The protein localises to the secreted. The catalysed reaction is a sphingomyelin + H2O = phosphocholine + an N-acylsphing-4-enine + H(+). The enzyme catalyses an N-acyl-15-methylhexadecasphing-4-enine-1-phosphocholine + H2O = an N-acyl-15-methylhexadecasphing-4-enine + phosphocholine + H(+). It functions in the pathway lipid metabolism; sphingolipid metabolism. Its function is as follows. Sphingomyelin phosphodiesterase (sphingomyelinase) that converts sphingomyelin to ceramide (N-acyl-sphingoid base) and phosphocholine at acidic pH. Displays its enzymatic activity when secreted. May play distinct roles in signaling. The polypeptide is Sphingomyelin phosphodiesterase 1 (asm-1) (Caenorhabditis elegans).